The chain runs to 632 residues: 2-oxoacid:ferredoxin oxidoreductase subunit alpha (632 aa).

The short motif at 253-257 (YPITP) is the YPITP motif element. Residues Thr-256 and Arg-344 each contribute to the substrate site.

Heterodimer composed of an alpha and a beta subunit.

The protein localises to the cytoplasm. The enzyme catalyses a 2-oxocarboxylate + 2 oxidized [2Fe-2S]-[ferredoxin] + CoA = an acyl-CoA + 2 reduced [2Fe-2S]-[ferredoxin] + CO2 + H(+). In terms of biological role, catalyzes the coenzyme A-dependent oxidative decarboxylation of different 2-oxoacids such as 2-oxoglutarate, pyruvate and 2-oxobutyrate to form their CoA derivatives. The protein is 2-oxoacid:ferredoxin oxidoreductase subunit alpha of Sulfolobus sp.